Here is a 455-residue protein sequence, read N- to C-terminus: Probable pectate lyase 6 (455 aa).

Positions methionine 1–alanine 25 are cleaved as a signal peptide. Asparagine 55 and asparagine 75 each carry an N-linked (GlcNAc...) asparagine glycan. Residues aspartate 247, aspartate 271, and aspartate 275 each contribute to the Ca(2+) site. Arginine 327 is a catalytic residue.

Belongs to the polysaccharide lyase 1 family. It depends on Ca(2+) as a cofactor.

It catalyses the reaction Eliminative cleavage of (1-&gt;4)-alpha-D-galacturonan to give oligosaccharides with 4-deoxy-alpha-D-galact-4-enuronosyl groups at their non-reducing ends.. The protein operates within glycan metabolism; pectin degradation; 2-dehydro-3-deoxy-D-gluconate from pectin: step 2/5. The chain is Probable pectate lyase 6 from Arabidopsis thaliana (Mouse-ear cress).